We begin with the raw amino-acid sequence, 780 residues long: Cation channel sperm-associated protein 1 (780 aa).

3 disordered regions span residues M1–S37, L71–H306, and Q376–T412. Residues M1–L447 are Cytoplasmic-facing. A compositionally biased stretch (basic and acidic residues) spans S110–D122. A compositionally biased stretch (basic residues) spans Q211–P241. Over residues S261–H284 the composition is skewed to basic and acidic residues. Residues H285–Y299 show a composition bias toward basic residues. Positions S387 to F401 are enriched in basic and acidic residues. Residues Q402–T412 are compositionally biased toward basic residues. Residues A448–F469 form a helical membrane-spanning segment. The Extracellular portion of the chain corresponds to A470–W478. Residues Y479–I500 form a helical membrane-spanning segment. Topologically, residues A501–F508 are cytoplasmic. Residues D509–T531 form a helical membrane-spanning segment. The Extracellular segment spans residues H532 to S540. The chain crosses the membrane as a helical span at residues L541–L563. Residues S564–P581 are Cytoplasmic-facing. A helical membrane pass occupies residues S582–L604. At F605–N615 the chain is on the extracellular side. The segment at residues I616 to T628 is an intramembrane region (helical; Pore-forming). Residues L629–W645 lie on the Extracellular side of the membrane. Residues Y646–V671 traverse the membrane as a helical segment. Over D672–N780 the chain is Cytoplasmic.

Belongs to the cation channel sperm-associated (TC 1.A.1.19) family. In terms of assembly, component of the CatSper complex or CatSpermasome composed of the core pore-forming members CATSPER1, CATSPER2, CATSPER3 and CATSPER4 as well as auxiliary members CATSPERB, CATSPERG, CATSPERD, CATSPERE, CATSPERZ, C2CD6/CATSPERT, TMEM249, TMEM262 and EFCAB9. HSPA1 may be an additional auxiliary complex member. The core complex members CATSPER1, CATSPER2, CATSPER3 and CATSPER4 form a heterotetrameric channel. The auxiliary CATSPERB, CATSPERG, CATSPERD and CATSPERE subunits form a pavilion-like structure over the pore which stabilizes the complex through interactions with CATSPER4, CATSPER3, CATSPER1 and CATSPER2 respectively. TMEM262/CATSPERH interacts with CATSPERB, further stabilizing the complex. C2CD6/CATSPERT interacts at least with CATSPERD and is required for targeting the CatSper complex in the flagellar membrane. Interacts with Ca(v)3.3/CACNA1I, leading to suppression of T-type calcium channel activity. As to expression, testis-specific.

It is found in the cell projection. The protein resides in the cilium. It localises to the flagellum membrane. The catalysed reaction is Ca(2+)(in) = Ca(2+)(out). With respect to regulation, the CatSper calcium channel is indirectly activated by extracellular progesterone and prostaglandins following the sequence: progesterone &gt; PGF1-alpha = PGE1 &gt; PGA1 &gt; PGE2 &gt;&gt; PGD2. The CatSper calcium channel is directly inhibited by endocannabinoid 2-arachidonoylglycerol (2AG). Indirect activation by progesterone takes place via the following mechanism: progesterone binds and activates the acylglycerol lipase ABHD2, which in turn mediates hydrolysis of 2AG inhibitor, relieving inhibition of the CatSper channel. The primary effect of progesterone activation is to shift voltage dependence towards more physiological, negative membrane potentials; it is not mediated by metabotropic receptors and second messengers. Sperm capacitation enhances the effect of progesterone by providing additional negative shift. Also activated by the elevation of intracellular pH. Its function is as follows. Pore-forming subunit of the CatSper complex, a sperm-specific voltage-gated calcium channel that plays a central role in calcium-dependent physiological responses essential for successful fertilization, such as sperm hyperactivation, acrosome reaction and chemotaxis towards the oocyte. The chain is Cation channel sperm-associated protein 1 (CATSPER1) from Homo sapiens (Human).